We begin with the raw amino-acid sequence, 346 residues long: Phosphoribosylformylglycinamidine cyclo-ligase (346 aa).

The protein belongs to the AIR synthase family.

Its subcellular location is the cytoplasm. The enzyme catalyses 2-formamido-N(1)-(5-O-phospho-beta-D-ribosyl)acetamidine + ATP = 5-amino-1-(5-phospho-beta-D-ribosyl)imidazole + ADP + phosphate + H(+). Its pathway is purine metabolism; IMP biosynthesis via de novo pathway; 5-amino-1-(5-phospho-D-ribosyl)imidazole from N(2)-formyl-N(1)-(5-phospho-D-ribosyl)glycinamide: step 2/2. The polypeptide is Phosphoribosylformylglycinamidine cyclo-ligase (Bacillus cereus (strain ATCC 10987 / NRS 248)).